Consider the following 651-residue polypeptide: DNA endonuclease RBBP8 (651 aa).

2 coiled-coil regions span residues 35–84 (LQEL…EDRL) and 117–138 (ISEL…SLEL). Disordered stretches follow at residues 138 to 199 (LERL…PESR), 363 to 433 (NGRL…EHQA), and 487 to 539 (YESC…SDKS). Residues 363–379 (NGRLQSKNQETSEIETT) show a composition bias toward polar residues. Basic and acidic residues predominate over residues 380–391 (QDSKKKCLDGHT). The span at 503–515 (VYEEEREEDDPEE) shows a compositional bias: acidic residues. A compositionally biased stretch (basic and acidic residues) spans 525–539 (RPADRKPLVSDSDKS). 2 positions are modified to phosphothreonine: threonine 599 and threonine 611.

This sequence belongs to the COM1/SAE2/CtIP family. As to quaternary structure, homotetramer; formed by antiparallel association of helical extensions protruding from the N-termini of two parallel coiled-coil dimers. Interacts with the MRN complex; the interaction links DNA sensing to resection. Interacts with samhd1. Phosphorylation at Thr-599 and Thr-611 promote interaction with nbn and recruitment to double-strand breaks (DSBs).

Its subcellular location is the nucleus. It is found in the chromosome. Endonuclease that cooperates with the MRE11-RAD50-NBN (MRN) complex in DNA-end resection, the first step of double-strand break (DSB) repair through the homologous recombination (HR) pathway. Functions downstream of the MRN complex and ATM, promotes ATR activation and its recruitment to DSBs in the S/G2 phase facilitating the generation of ssDNA. Specifically promotes the endonuclease activity of the MRN complex to clear DNA ends containing protein adducts: recruited to DSBs by nbn following phosphorylation, and promotes the endonuclease of mre11 to clear protein-DNA adducts and generate clean double-strand break ends. The polypeptide is DNA endonuclease RBBP8 (rbbp8) (Danio rerio (Zebrafish)).